A 275-amino-acid chain; its full sequence is Large ribosomal subunit protein uL2 (275 aa).

The tract at residues 220–275 (QTRGAAMNPVDHPHGGGEGKTGSSGHPVSPWGMPAKGFKTRKKKASDKLIISRRKK) is disordered. The span at 257 to 275 (FKTRKKKASDKLIISRRKK) shows a compositional bias: basic residues.

Belongs to the universal ribosomal protein uL2 family. Part of the 50S ribosomal subunit. Forms a bridge to the 30S subunit in the 70S ribosome.

One of the primary rRNA binding proteins. Required for association of the 30S and 50S subunits to form the 70S ribosome, for tRNA binding and peptide bond formation. It has been suggested to have peptidyltransferase activity; this is somewhat controversial. Makes several contacts with the 16S rRNA in the 70S ribosome. This is Large ribosomal subunit protein uL2 from Wolinella succinogenes (strain ATCC 29543 / DSM 1740 / CCUG 13145 / JCM 31913 / LMG 7466 / NCTC 11488 / FDC 602W) (Vibrio succinogenes).